The following is a 467-amino-acid chain: Cysteine--tRNA ligase (467 aa).

Cys29 contributes to the Zn(2+) binding site. Positions 31–41 (PTVYDDSHLGH) match the 'HIGH' region motif. A disordered region spans residues 155 to 174 (KLSGRGEDLEQVSRIESSEE). Residues 158 to 174 (GRGEDLEQVSRIESSEE) show a composition bias toward basic and acidic residues. Cys210, His239, and Glu243 together coordinate Zn(2+). Positions 271–275 (KMSKS) match the 'KMSKS' region motif. An ATP-binding site is contributed by Lys274.

Belongs to the class-I aminoacyl-tRNA synthetase family. In terms of assembly, monomer. Requires Zn(2+) as cofactor.

Its subcellular location is the cytoplasm. It catalyses the reaction tRNA(Cys) + L-cysteine + ATP = L-cysteinyl-tRNA(Cys) + AMP + diphosphate. This Wolinella succinogenes (strain ATCC 29543 / DSM 1740 / CCUG 13145 / JCM 31913 / LMG 7466 / NCTC 11488 / FDC 602W) (Vibrio succinogenes) protein is Cysteine--tRNA ligase.